Consider the following 435-residue polypeptide: Serine hydroxymethyltransferase 2 (435 aa).

(6S)-5,6,7,8-tetrahydrofolate contacts are provided by residues Leu135 and 139–141; that span reads GHL. Lys244 is modified (N6-(pyridoxal phosphate)lysine). A (6S)-5,6,7,8-tetrahydrofolate-binding site is contributed by Glu260.

The protein belongs to the SHMT family. In terms of assembly, homodimer. The cofactor is pyridoxal 5'-phosphate.

It localises to the cytoplasm. The catalysed reaction is (6R)-5,10-methylene-5,6,7,8-tetrahydrofolate + glycine + H2O = (6S)-5,6,7,8-tetrahydrofolate + L-serine. It functions in the pathway one-carbon metabolism; tetrahydrofolate interconversion. Its pathway is amino-acid biosynthesis; glycine biosynthesis; glycine from L-serine: step 1/1. Its function is as follows. Catalyzes the reversible interconversion of serine and glycine with tetrahydrofolate (THF) serving as the one-carbon carrier. This reaction serves as the major source of one-carbon groups required for the biosynthesis of purines, thymidylate, methionine, and other important biomolecules. Also exhibits THF-independent aldolase activity toward beta-hydroxyamino acids, producing glycine and aldehydes, via a retro-aldol mechanism. The protein is Serine hydroxymethyltransferase 2 of Vibrio cholerae serotype O1 (strain ATCC 39315 / El Tor Inaba N16961).